We begin with the raw amino-acid sequence, 109 residues long: Resistin (109 aa).

The signal sequence occupies residues methionine 1 to glycine 18. Cystine bridges form between cysteine 51–cysteine 104, cysteine 63–cysteine 103, cysteine 72–cysteine 89, cysteine 74–cysteine 91, and cysteine 78–cysteine 93.

Belongs to the resistin/FIZZ family. As to quaternary structure, homodimer; disulfide-linked.

Its subcellular location is the secreted. In terms of biological role, hormone that seems to suppress insulin ability to stimulate glucose uptake into adipose cells. Potentially links obesity to diabetes. This chain is Resistin (RETN), found in Bos taurus (Bovine).